The chain runs to 308 residues: uncharacterized protein (308 aa).

The HTH lysR-type domain maps to 1 to 60; it reads MNYSLKQLKVFVTVAQEKSFSRAGERIGLSQSAVSHSVKELENHTGVRLLDRTTREVVLT. The H-T-H motif DNA-binding region spans 20–39; sequence FSRAGERIGLSQSAVSHSVK.

This sequence belongs to the LysR transcriptional regulatory family.

This is an uncharacterized protein from Shigella flexneri.